Here is a 393-residue protein sequence, read N- to C-terminus: 1-deoxy-D-xylulose 5-phosphate reductoisomerase (393 aa).

Residues threonine 10, glycine 11, serine 12, isoleucine 13, arginine 37, glutamine 38, and asparagine 124 each coordinate NADPH. Lysine 125 lines the 1-deoxy-D-xylulose 5-phosphate pocket. Glutamate 126 is a binding site for NADPH. Aspartate 150 is a Mn(2+) binding site. Positions 151, 152, 179, and 202 each coordinate 1-deoxy-D-xylulose 5-phosphate. Glutamate 152 is a Mn(2+) binding site. Glycine 208 contacts NADPH. 1-deoxy-D-xylulose 5-phosphate is bound by residues serine 215, asparagine 220, lysine 221, and glutamate 224. Glutamate 224 contributes to the Mn(2+) binding site.

The protein belongs to the DXR family. Mg(2+) serves as cofactor. The cofactor is Mn(2+).

The enzyme catalyses 2-C-methyl-D-erythritol 4-phosphate + NADP(+) = 1-deoxy-D-xylulose 5-phosphate + NADPH + H(+). Its pathway is isoprenoid biosynthesis; isopentenyl diphosphate biosynthesis via DXP pathway; isopentenyl diphosphate from 1-deoxy-D-xylulose 5-phosphate: step 1/6. Its function is as follows. Catalyzes the NADPH-dependent rearrangement and reduction of 1-deoxy-D-xylulose-5-phosphate (DXP) to 2-C-methyl-D-erythritol 4-phosphate (MEP). The protein is 1-deoxy-D-xylulose 5-phosphate reductoisomerase of Cupriavidus taiwanensis (strain DSM 17343 / BCRC 17206 / CCUG 44338 / CIP 107171 / LMG 19424 / R1) (Ralstonia taiwanensis (strain LMG 19424)).